An 860-amino-acid polypeptide reads, in one-letter code: Protein argonaute-2 (860 aa).

Residue Tyr-2 is modified to 3'-nitrotyrosine. A PAZ domain is found at 230 to 349 (PVIEFVCEVL…LPLEVCNIVA (120 aa)). The interval 312-317 (YFKDRH) is interaction with guide RNA. A Phosphoserine modification is found at Ser-388. Residues 518 to 819 (LVVVILPGKT…VAFRARYHLV (302 aa)) form the Piwi domain. The interaction with guide RNA stretch occupies residues 525–567 (GKTPVYAEVKRVGDTVLGMATQCVQMKNVQRTTPQTLSNLCLK). Residues 588–591 (FQQP) form an interaction with GW182 family members region. Asp-598 is an a divalent metal cation binding site. Residues 651–661 (LIQFYKSTRFK) are interaction with GW182 family members. Position 670 (Asp-670) interacts with a divalent metal cation. Pro-701 carries the 4-hydroxyproline modification. Interaction with guide RNA stretches follow at residues 710-711 (KR), 754-762 (HAGIQGTSR), and 791-813 (YVRCTRSVSIPAPAYYAHLVAFR). An a divalent metal cation-binding site is contributed by His-808. Phosphoserine occurs at positions 825, 829, 832, and 835.

The protein belongs to the argonaute family. Ago subfamily. Interacts with DICER1 through its Piwi domain and with TARBP2 during assembly of the RNA-induced silencing complex (RISC). Together, DICER1, AGO2 and TARBP2 constitute the trimeric RISC loading complex (RLC), or micro-RNA (miRNA) loading complex (miRLC). Within the RLC/miRLC, DICER1 and TARBP2 are required to process precursor miRNAs (pre-miRNAs) to mature miRNAs and then load them onto AGO2. AGO2 bound to the mature miRNA constitutes the minimal RISC and may subsequently dissociate from DICER1 and TARBP2. Note however that the term RISC has also been used to describe the trimeric RLC/miRLC. The formation of RISC complexes containing siRNAs rather than miRNAs appears to occur independently of DICER1. Interacts with AGO1. Also interacts with DDB1, DDX5, DDX6, DDX20, DHX30, DHX36, DDX47, DHX9, ELAVL, FXR1, GEMIN4, HNRNPF, IGF2BP1, ILF3, IMP8, MATR3, PABPC1, PRMT5, P4HA1, P4HB, RBM4, SART3, TNRC6A, TNRC6B, UPF1 and YBX1. Interacts with the P-body components DCP1A and XRN1. Associates with polysomes and messenger ribonucleoproteins (mNRPs). Interacts with RBM4; the interaction is modulated under stress-induced conditions, occurs under both cell proliferation and differentiation conditions and in an RNA- and phosphorylation-independent manner. Interacts with LIMD1, WTIP and AJUBA. Interacts with TRIM71; the interaction increases in presence of RNA. Interacts with APOBEC3G in an RNA-dependent manner. Interacts with APOBEC3A, APOBEC3C, APOBEC3F and APOBEC3H. Interacts with DICER1, TARBP2, EIF6, MOV10 and RPL7A (60S ribosome subunit); they form a large RNA-induced silencing complex (RISC). Interacts with FMR1. Interacts with ZFP36. Interacts with RC3H1; the interaction is RNA independent. Found in a complex, composed of AGO2, CHD7 and ARB2A. Interacts with SND1 and SYT11. Interacts with CLNK. Interacts with GARRE1. Interacts with GRB2; this interaction is important for the formation of a ternary complex containing GRB2, AGO2 and DICER1. The cofactor is Mg(2+). Mn(2+) is required as a cofactor. Post-translationally, hydroxylated. 4-hydroxylation appears to enhance protein stability but is not required for miRNA-binding or endonuclease activity. In terms of processing, ubiquitinated on surface-exposed lysines by a SCF-like E3 ubiquitin-protein ligase complex containing ZSWIM8 during target-directed microRNA degradation (TDMD), a process that mediates degradation of microRNAs (miRNAs). Ubiquitination by the SCF-like E3 ubiquitin-protein ligase complex containing ZSWIM8 leads to its subsequent degradation, thereby exposing miRNAs for degradation. ZSWIM8 recognizes and binds AGO2 when it is engaged with a TDMD target. Phosphorylation at Ser-388 by AKT3; leads to up-regulate translational repression of microRNA target and down-regulate endonucleolytic cleavage. Post-translationally, a phosphorylation cycle of C-terminal serine cluster (Ser-825-Ser-835) regulates the release of target mRNAs. Target-binding leads to phosphorylation of these residues by CSNK1A1, which reduces the affinity of AGO2 for mRNA and enables target release. The ANKRD52-PPP6C phosphatase complex dephosphorylates the residues, which primes AGO2 for binding a new target.

It localises to the cytoplasm. The protein resides in the P-body. It is found in the nucleus. The enzyme catalyses Endonucleolytic cleavage to 5'-phosphomonoester.. Functionally, required for RNA-mediated gene silencing (RNAi) by the RNA-induced silencing complex (RISC). The 'minimal RISC' appears to include AGO2 bound to a short guide RNA such as a microRNA (miRNA) or short interfering RNA (siRNA). These guide RNAs direct RISC to complementary mRNAs that are targets for RISC-mediated gene silencing. The precise mechanism of gene silencing depends on the degree of complementarity between the miRNA or siRNA and its target. Binding of RISC to a perfectly complementary mRNA generally results in silencing due to endonucleolytic cleavage of the mRNA specifically by AGO2. Binding of RISC to a partially complementary mRNA results in silencing through inhibition of translation, and this is independent of endonuclease activity. May inhibit translation initiation by binding to the 7-methylguanosine cap, thereby preventing the recruitment of the translation initiation factor eIF4-E. May also inhibit translation initiation via interaction with EIF6, which itself binds to the 60S ribosomal subunit and prevents its association with the 40S ribosomal subunit. The inhibition of translational initiation leads to the accumulation of the affected mRNA in cytoplasmic processing bodies (P-bodies), where mRNA degradation may subsequently occur. In some cases RISC-mediated translational repression is also observed for miRNAs that perfectly match the 3' untranslated region (3'-UTR). Can also up-regulate the translation of specific mRNAs under certain growth conditions. Binds to the AU element of the 3'-UTR of the TNF (TNF-alpha) mRNA and up-regulates translation under conditions of serum starvation. Also required for transcriptional gene silencing (TGS), in which short RNAs known as antigene RNAs or agRNAs direct the transcriptional repression of complementary promoter regions. This Rattus norvegicus (Rat) protein is Protein argonaute-2 (Ago2).